The following is a 223-amino-acid chain: MTNERTVKGVLGTKLGMTQLWDEHNRLVPVTVIQAGPCVVTQVRTPETDGYSAVQLGYGAVKAKNVTKPEAGHFEKAGVTPRRHLVELRTADASEYTLGQEIAADVFSESDFVDVTGTSKGKGTAGVMKRHGFGGLRATHGVHRKHRSPGSIGGCSTPGKVIKGLRMAGRMGVERVTVQNLQVHSVDAERGIMLVRGAVPGPKGSLLVVRSAAKKAAKNGDAA.

The protein belongs to the universal ribosomal protein uL3 family. Part of the 50S ribosomal subunit. Forms a cluster with proteins L14 and L19.

Functionally, one of the primary rRNA binding proteins, it binds directly near the 3'-end of the 23S rRNA, where it nucleates assembly of the 50S subunit. The protein is Large ribosomal subunit protein uL3 of Cutibacterium acnes (strain DSM 16379 / KPA171202) (Propionibacterium acnes).